Here is a 1043-residue protein sequence, read N- to C-terminus: Isoleucine--tRNA ligase (1043 aa).

Positions 49–59 match the 'HIGH' region motif; the sequence is PFATGLPHYGH. The 'KMSKS' region motif lies at 592–596; that stretch reads KMSKR. Lys-595 lines the ATP pocket.

It belongs to the class-I aminoacyl-tRNA synthetase family. IleS type 2 subfamily. As to quaternary structure, monomer. Requires Zn(2+) as cofactor.

The protein resides in the cytoplasm. It catalyses the reaction tRNA(Ile) + L-isoleucine + ATP = L-isoleucyl-tRNA(Ile) + AMP + diphosphate. In terms of biological role, catalyzes the attachment of isoleucine to tRNA(Ile). As IleRS can inadvertently accommodate and process structurally similar amino acids such as valine, to avoid such errors it has two additional distinct tRNA(Ile)-dependent editing activities. One activity is designated as 'pretransfer' editing and involves the hydrolysis of activated Val-AMP. The other activity is designated 'posttransfer' editing and involves deacylation of mischarged Val-tRNA(Ile). In Chlamydia caviae (strain ATCC VR-813 / DSM 19441 / 03DC25 / GPIC) (Chlamydophila caviae), this protein is Isoleucine--tRNA ligase.